The primary structure comprises 2227 residues: Genome polyprotein (2227 aa).

2 short sequence motifs ((L)YPX(n)L motif) span residues 167–171 (YPHGL) and 200–205 (YPVWEL). The tract at residues 766-836 (MMSRIAAGDL…PRKMKGLFSQ (71 aa)) is involved in P1-2A pentamerization. Residues 1011-1031 (TVEIINTVLCFVKSGILLYVI) traverse the membrane as a helical segment. The membrane-penetrating ability stretch occupies residues 1043-1070 (IGLLRVMNYADIGCSVISCGKVFSKMLE). A coiled-coil region spans residues 1127–1152 (KKKDILNILKDNQQKIEKAIEEADNF). Residues 1204-1366 (HQKLKNLGSI…SFFKNPHNDM (163 aa)) form the SF3 helicase domain. 1230-1237 (GKRGGGKS) is a binding site for ATP. Residues 1462–1482 (WVAVGAAVGILGVLVGGWFVY) traverse the membrane as a helical segment. Residue Y1499 is modified to O-(5'-phospho-RNA)-tyrosine. One can recognise a Peptidase C3 domain in the interval 1514 to 1728 (DPVESQSTLE…VAKLVTQEMF (215 aa)). Active-site for protease 3C activity residues include H1563, D1603, and C1691. One can recognise a RdRp catalytic domain in the interval 1976–2097 (DVGLDLDFSA…VFSRDVQIDN (122 aa)).

It belongs to the picornaviridae polyprotein family. As to quaternary structure, homodimer. Homomultimer; probably interacts with membranes in a multimeric form. Seems to assemble into amyloid-like fibers. In terms of assembly, homodimer. Monomer. Interacts with protein 3CD. Interacts with host ACBD3. As to quaternary structure, interacts with protein 3AB. In terms of assembly, interacts with human MAVS. Homodimer; disulfide-linked. As to quaternary structure, homopentamer. Homooligomer. In terms of assembly, interacts with capsid protein VP2. Interacts with capsid protein VP3. Interacts with capsid protein VP1. Interacts with capsid protein VP3. As to quaternary structure, interacts with capsid protein VP1. Interacts with capsid protein VP2. Post-translationally, specific enzymatic cleavages by viral protease in vivo yield a variety of precursors and mature proteins. Polyprotein processing intermediates are produced, such as P1-2A which is a functional precursor of the structural proteins, VP0 which is a VP4-VP2 precursor, VP1-2A precursor, 3ABC precursor which is a stable and catalytically active precursor of 3A, 3B and 3C proteins, 3AB and 3CD precursors. The assembly signal 2A is removed from VP1-2A by a host protease, possibly host Cathepsin L. This cleavage occurs over a region of 3 amino-acids probably generating VP1 proteins with heterogeneous C-termini. In terms of processing, during virion maturation, immature virions are rendered infectious following cleavage of VP0 into VP4 and VP2. This maturation seems to be an autocatalytic event triggered by the presence of RNA in the capsid and is followed by a conformational change of the particle. The assembly signal 2A is removed from VP1-2A by a host protease, possibly host Cathepsin L in naked virions. This cleavage does not occur in enveloped virions. This cleavage occurs over a region of 3 amino-acids probably generating VP1 proteins with heterogeneous C-termini. Post-translationally, VPg is uridylylated prior to priming replication into VPg-pUpU. In terms of processing, unlike other picornaviruses, does not seem to be myristoylated.

It is found in the virion. Its subcellular location is the host endosome. The protein localises to the host multivesicular body. It localises to the host membrane. The protein resides in the host mitochondrion outer membrane. It is found in the host cytoplasm. Its subcellular location is the host cytoplasmic vesicle membrane. It catalyses the reaction RNA(n) + a ribonucleoside 5'-triphosphate = RNA(n+1) + diphosphate. The catalysed reaction is a ribonucleoside 5'-triphosphate + H2O = a ribonucleoside 5'-diphosphate + phosphate + H(+). It carries out the reaction Selective cleavage of Gln-|-Gly bond in the poliovirus polyprotein. In other picornavirus reactions Glu may be substituted for Gln, and Ser or Thr for Gly.. Capsid proteins VP1, VP2, and VP3 form a closed capsid enclosing the viral positive strand RNA genome. All these proteins contain a beta-sheet structure called beta-barrel jelly roll. Together they form an icosahedral capsid (T=3) composed of 60 copies of each VP1, VP2, and VP3, with a diameter of approximately 300 Angstroms. VP1 is situated at the 12 fivefold axes, whereas VP2 and VP3 are located at the quasi-sixfold axes. The naked capsid interacts with the host receptor HAVCR1 to provide virion attachment to and probably entry into the target cell. Functionally, VP0 precursor is a component of the immature procapsids. Its function is as follows. Plays a role in the assembly of the 12 pentamers into an icosahedral structure. Has not been detected in mature virions, supposedly owing to its small size. In terms of biological role, precursor component of immature procapsids that corresponds to an extended form of the structural protein VP1. After maturation, possibly by the host Cathepsin L, the assembly signal 2A is cleaved to give rise to the mature VP1 protein. Functions as a viroporin. Affects membrane integrity and causes an increase in membrane permeability. Involved in host intracellular membrane rearrangements probably to give rise to the viral factories. Does not disrupt calcium homeostasis or glycoprotein trafficking. Antagonizes the innate immune response of the host by suppressing IFN-beta synthesis, which it achieves by interfering with the RIG-I/IFIH1 pathway. Functionally, affects membrane integrity and causes an increase in membrane permeability. Its function is as follows. Associates with and induces structural rearrangements of intracellular membranes. Displays RNA-binding activity. In terms of biological role, the precursor 3ABC is targeted to the mitochondrial membrane where protease 3C activity cleaves and inhibits the host antiviral protein MAVS, thereby disrupting activation of IRF3 through the IFIH1/MDA5 pathway. In vivo, the protease activity of 3ABC precursor is more efficient in cleaving the 2BC precursor than that of protein 3C. The 3ABC precursor may therefore play a role in the proteolytic processing of the polyprotein. Possible viroporin. Interacts with the 3CD precursor and with RNA structures found at both the 5'- and 3'-termini of the viral genome. Since the 3AB precursor contains the hydrophobic domain 3A, it probably anchors the whole viral replicase complex to intracellular membranes on which viral RNA synthesis occurs. Functionally, may serve as membrane anchor to the 3AB and 3ABC precursors via its hydrophobic domain. May interact with RNA. Its function is as follows. Acts as a primer for viral RNA replication and remains covalently bound to viral genomic RNA. VPg is uridylylated prior to priming replication into VPg-pUpU. The VPg-pUpU is then used as primer on the genomic RNA poly(A) by the RNA-dependent RNA polymerase to replicate the viral genome. In terms of biological role, cysteine protease that generates mature viral proteins from the precursor polyprotein. In addition to its proteolytic activity, it binds to viral RNA, and thus influences viral genome replication. RNA and substrate bind cooperatively to the protease. Cleaves IKBKG/NEMO to impair innate immune signaling. Cleaves host PABPC1 which may participate in the switch of viral translation to RNA synthesis. Interacts with the 3AB precursor and with RNA structures found at both the 5'- and 3'-termini of the viral genome. Disrupts TLR3 signaling by degrading the host adapter protein TICAM1/TRIF. Functionally, RNA-directed RNA polymerase 3D-POL replicates genomic and antigenomic RNA by recognizing replications specific signals. The protein is Genome polyprotein of Human hepatitis A virus genotype IA (isolate H2) (HHAV).